The chain runs to 283 residues: NAD kinase (283 aa).

Aspartate 66 serves as the catalytic Proton acceptor. Residues 66-67 (DG), 140-141 (ND), arginine 151, arginine 168, aspartate 170, and glutamine 240 each bind NAD(+).

This sequence belongs to the NAD kinase family. A divalent metal cation serves as cofactor.

The protein localises to the cytoplasm. The catalysed reaction is NAD(+) + ATP = ADP + NADP(+) + H(+). Involved in the regulation of the intracellular balance of NAD and NADP, and is a key enzyme in the biosynthesis of NADP. Catalyzes specifically the phosphorylation on 2'-hydroxyl of the adenosine moiety of NAD to yield NADP. In Syntrophobacter fumaroxidans (strain DSM 10017 / MPOB), this protein is NAD kinase.